We begin with the raw amino-acid sequence, 189 residues long: Accessory gene regulator protein B (189 aa).

Transmembrane regions (helical) follow at residues 49–69 (IAYILNIFLFTLITNLTFYLI), 81–100 (SFWCYVESIILFILLPLVIV), 110–130 (IILTVISLGVISVYAPAATKK), 143–163 (YYAIIVSLTLFIITLIIKEPF), and 164–184 (AQFIQLGIIIEAITLLPIFFI).

It belongs to the AgrB family.

The protein localises to the cell membrane. Functionally, essential for the production of a quorum sensing system signal molecule, the autoinducing peptide (AIP). This quorum sensing system is responsible for the regulation of the expression of virulence factor genes. Involved in the proteolytic processing of AgrD, the precursor of AIP. The sequence is that of Accessory gene regulator protein B from Staphylococcus aureus (strain COL).